The following is a 90-amino-acid chain: NELL2-interacting cell ontogeny regulator 1 (90 aa).

A signal peptide spans 1 to 26 (MVSSGYLQAVMLLLAVQLLCFRPSDA).

The protein belongs to the NICOL family.

Its subcellular location is the secreted. MRNA-binding protein which interacts with a range of target mRNAs and may promote extracellular matrix production. The polypeptide is NELL2-interacting cell ontogeny regulator 1 (Salmo salar (Atlantic salmon)).